A 902-amino-acid polypeptide reads, in one-letter code: HTH-type transcriptional regulator MalT (902 aa).

39–46 is a binding site for ATP; sequence SPAGYGKT. Positions 830-895 constitute an HTH luxR-type domain; that stretch reads ELIRTSPLTQ…DAVQHAQQLL (66 aa). A DNA-binding region (H-T-H motif) is located at residues 854–873; the sequence is NEQIAGELAVAATTIKTHIR.

This sequence belongs to the MalT family. In terms of assembly, monomer in solution. Oligomerizes to an active state in the presence of the positive effectors ATP and maltotriose.

With respect to regulation, activated by ATP and maltotriose, which are both required for DNA binding. Its function is as follows. Positively regulates the transcription of the maltose regulon whose gene products are responsible for uptake and catabolism of malto-oligosaccharides. Specifically binds to the promoter region of its target genes, recognizing a short DNA motif called the MalT box. This chain is HTH-type transcriptional regulator MalT, found in Salmonella dublin (strain CT_02021853).